The primary structure comprises 442 residues: Proline--tRNA ligase (442 aa).

The protein belongs to the class-II aminoacyl-tRNA synthetase family. ProS type 2 subfamily. Homodimer.

It localises to the cytoplasm. The catalysed reaction is tRNA(Pro) + L-proline + ATP = L-prolyl-tRNA(Pro) + AMP + diphosphate. Catalyzes the attachment of proline to tRNA(Pro) in a two-step reaction: proline is first activated by ATP to form Pro-AMP and then transferred to the acceptor end of tRNA(Pro). This chain is Proline--tRNA ligase, found in Mesorhizobium japonicum (strain LMG 29417 / CECT 9101 / MAFF 303099) (Mesorhizobium loti (strain MAFF 303099)).